A 1286-amino-acid chain; its full sequence is ABC transporter B family member 4 (1286 aa).

The segment at 1–39 (MASESGLNGDPNILEEVSETKRDKEEEEEVKKTEKKDEE) is disordered. Residues 18–39 (SETKRDKEEEEEVKKTEKKDEE) show a composition bias toward basic and acidic residues. Residues 60-80 (FLLMILGTLGSIGNGLGFPLM) traverse the membrane as a helical segment. The ABC transmembrane type-1 1 domain maps to 63 to 349 (MILGTLGSIG…TSPCLSAFAA (287 aa)). N-linked (GlcNAc...) asparagine glycans are attached at residues N94 and N97. Transmembrane regions (helical) follow at residues 109–129 (FVWL…GWMI), 186–206 (IQLL…GWLL), 208–228 (LVML…AIVI), 288–308 (GLGL…AVWY), and 317–337 (GYTG…SMSL). The 237-residue stretch at 384–620 (IELKDVYFTY…PEGAYSQLIR (237 aa)) folds into the ABC transporter 1 domain. 419–426 (GQSGSGKS) contacts ATP. N-linked (GlcNAc...) asparagine glycans are attached at residues N500 and N571. The span at 625–636 (KKSDENAAEEQK) shows a compositional bias: basic and acidic residues. Residues 625–669 (KKSDENAAEEQKMSSIESFKQSSLRKSSLGRSLSKGGSSRGNSSR) are disordered. A compositionally biased stretch (low complexity) spans 646–669 (SSLRKSSLGRSLSKGGSSRGNSSR). N666 is a glycosylation site (N-linked (GlcNAc...) asparagine). S671 carries the post-translational modification Phosphoserine. The ABC transmembrane type-1 2 domain occupies 720 to 1007 (LILGSISAAA…SSSLSPDSSK (288 aa)). A run of 2 helical transmembrane segments spans residues 721-741 (ILGS…GILI) and 764-784 (IIFM…TFFF). N816 and N846 each carry an N-linked (GlcNAc...) asparagine glycan. The next 4 membrane-spanning stretches (helical) occupy residues 850–870 (ILAG…VVLA), 871–891 (MLPL…GFSA), 942–962 (GIVS…SYAA), and 976–996 (TTFD…MAIS). The ABC transporter 2 domain maps to 1042–1279 (IELRHVSFKY…KDGVYASLVQ (238 aa)). Position 1077–1084 (1077–1084 (GESGSGKS)) interacts with ATP. 2 N-linked (GlcNAc...) asparagine glycosylation sites follow: N1131 and N1230.

It belongs to the ABC transporter superfamily. ABCB family. Multidrug resistance exporter (TC 3.A.1.201) subfamily. Interacts with 1-naphthylphthalamic acid (NPA). Post-translationally, phosphorylation level varies significantly during early response to bacterial elicitor. In terms of tissue distribution, mostly expressed in roots, especially in the root elongation zone and lateral roots. In mature portion of the root, expressed in the epidermis and cortex. In the root elongation zone, confined to epidermis. In root tips, present in the root cap, S3 columella and epidermal cells.

It localises to the cell membrane. Functionally, auxin influx transporter that mediates the transport of auxin in roots. Contributes to the basipetal transport in hypocotyls and root tips by establishing an auxin uptake sink in the root cap. Confers sensitivity to 1-N-naphthylphthalamic acid (NPA). Regulates the root elongation, the initiation of lateral roots and the development of root hairs. Can transport IAA, indole-3-propionic acid, NPA syringic acid, vanillic acid and some auxin metabolites, but not 2,4-D and 1-naphthaleneacetic acid. The polypeptide is ABC transporter B family member 4 (ABCB4) (Arabidopsis thaliana (Mouse-ear cress)).